A 470-amino-acid chain; its full sequence is Carboxypeptidase Q (470 aa).

The first 18 residues, 1–18 (MRSLFFLFIVHLLALGSG), serve as a signal peptide directing secretion. Residues 19 to 42 (KAVFKNGVSQRTFREIKEEIANYE) constitute a propeptide that is removed on maturation. N-linked (GlcNAc...) asparagine glycosylation occurs at asparagine 59. Zn(2+) contacts are provided by histidine 288 and aspartate 300. Glutamate 334 functions as the Nucleophile in the catalytic mechanism. Glutamate 335 lines the Zn(2+) pocket. Asparagine 351 is a glycosylation site (N-linked (GlcNAc...) asparagine). Aspartate 362 provides a ligand contact to Zn(2+). The N-linked (GlcNAc...) asparagine glycan is linked to asparagine 394. Histidine 432 lines the Zn(2+) pocket.

Belongs to the peptidase M28 family. As to quaternary structure, homodimer. The monomeric form is inactive while the homodimer is active. N-glycosylated. The secreted form is modified by hybrid or complex type oligosaccharide chains.

Its subcellular location is the endoplasmic reticulum. It is found in the golgi apparatus. The protein resides in the lysosome. The protein localises to the secreted. In terms of biological role, carboxypeptidase that may play an important role in the hydrolysis of circulating peptides. Catalyzes the hydrolysis of dipeptides with unsubstituted terminals into amino acids. May play a role in the liberation of thyroxine hormone from its thyroglobulin (Tg) precursor. The chain is Carboxypeptidase Q (Cpq) from Mus musculus (Mouse).